The sequence spans 628 residues: Choline transporter-like protein 2 (628 aa).

Residues 1 to 31 lie on the Cytoplasmic side of the membrane; that stretch reads MSSEDLQDHHEIGNEVIKKKGVYTKKKCQDC. Residues 32-52 form a helical membrane-spanning segment; sequence FFLILFLLFWAGMIVVAAFGV. The Extracellular segment spans residues 53–204; the sequence is KNGKPDRIVK…EILTDLTNSW (152 aa). Residues N82, N118, N146, and N168 are each glycosylated (N-linked (GlcNAc...) asparagine). A helical transmembrane segment spans residues 205–225; that stretch reads RYLIYGALIAMGLGLTWIFLL. Residue R226 is a topological domain, cytoplasmic. The chain crosses the membrane as a helical span at residues 227-247; the sequence is FFAGFITWLTVFAAYACLGLL. Topologically, residues 248-282 are extracellular; sequence TAQVYFQWQDSKDAYENTIPSQRLVMQEKNILALK. The chain crosses the membrane as a helical span at residues 283-303; sequence VIFIILCVVCGIFALILLALF. The Cytoplasmic segment spans residues 304-319; the sequence is SRIRIAIRIIKECSRA. Residues 320–340 traverse the membrane as a helical segment; it reads IGIMPSIFFFPIFIFLLLCGF. At 341 to 381 the chain is on the extracellular side; the sequence is TVYWVYIGVYLATAGSPTYDDQYRFTGYEADSKLQKIQIYH. Residues 382–402 traverse the membrane as a helical segment; sequence FFGYLWTFAFILALNQTTIAG. Residues 403–432 are Cytoplasmic-facing; that stretch reads AISSWYWVQDKKDTPFFPVWSSFFRVIRYH. The helical transmembrane segment at 433–453 threads the bilayer; the sequence is LGSIALGSLILAIVQFIRWVL. The Extracellular portion of the chain corresponds to 454–530; that stretch reads RFLEKKFKGK…RVAAVNLVSS (77 aa). The helical transmembrane segment at 531-551 threads the bilayer; it reads FLMFLGRVFITAATVGISLYL. Residues 552–559 lie on the Cytoplasmic side of the membrane; sequence LKEHENLS. The helical transmembrane segment at 560–580 threads the bilayer; it reads FYIIPVILIGFIAFAISTGFM. Residues 581–628 are Extracellular-facing; it reads SVYDMSIDTMLLCFCEDCERNDGSPERPYYMSKSLRKFVDGKGRSKCC.

The protein belongs to the CTL (choline transporter-like) family.

Its subcellular location is the cell membrane. It localises to the mitochondrion outer membrane. It catalyses the reaction choline(out) + n H(+)(in) = choline(in) + n H(+)(out). The enzyme catalyses ethanolamine(out) + n H(+)(in) = ethanolamine(in) + n H(+)(out). Choline/H+ antiporter, mainly in mitochodria. Also acts as a low-affinity ethanolamine/H+ antiporter, regulating the supply of extracellular ethanolamine (Etn) for the CDP-Etn pathway, redistribute intracellular Etn and balance the CDP-Cho and CDP-Etn arms of the Kennedy pathway. The sequence is that of Choline transporter-like protein 2 (slc44a2) from Dictyostelium discoideum (Social amoeba).